A 331-amino-acid chain; its full sequence is Beta-ketoacyl-[acyl-carrier-protein] synthase III (331 aa).

Active-site residues include Cys-115 and His-255. Positions 256–260 (QANFR) are ACP-binding. The active site involves Asn-285.

The protein belongs to the thiolase-like superfamily. FabH family. Homodimer.

It is found in the cytoplasm. The catalysed reaction is malonyl-[ACP] + acetyl-CoA + H(+) = 3-oxobutanoyl-[ACP] + CO2 + CoA. It participates in lipid metabolism; fatty acid biosynthesis. Functionally, catalyzes the condensation reaction of fatty acid synthesis by the addition to an acyl acceptor of two carbons from malonyl-ACP. Catalyzes the first condensation reaction which initiates fatty acid synthesis and may therefore play a role in governing the total rate of fatty acid production. Possesses both acetoacetyl-ACP synthase and acetyl transacylase activities. Its substrate specificity determines the biosynthesis of branched-chain and/or straight-chain of fatty acids. This Helicobacter pylori (strain J99 / ATCC 700824) (Campylobacter pylori J99) protein is Beta-ketoacyl-[acyl-carrier-protein] synthase III.